Consider the following 473-residue polypeptide: Glutamate--tRNA ligase 1 (473 aa).

Residues 11-21 (PSPTGYLHIGG) carry the 'HIGH' region motif. The span at 113-133 (KARAEGRPPRYDGRWRDRDPS) shows a compositional bias: basic and acidic residues. A disordered region spans residues 113–136 (KARAEGRPPRYDGRWRDRDPSEAP). A 'KMSKS' region motif is present at residues 240–244 (KLSKR). An ATP-binding site is contributed by lysine 243.

This sequence belongs to the class-I aminoacyl-tRNA synthetase family. Glutamate--tRNA ligase type 1 subfamily. As to quaternary structure, monomer.

The protein resides in the cytoplasm. The enzyme catalyses tRNA(Glu) + L-glutamate + ATP = L-glutamyl-tRNA(Glu) + AMP + diphosphate. Its function is as follows. Catalyzes the attachment of glutamate to tRNA(Glu) in a two-step reaction: glutamate is first activated by ATP to form Glu-AMP and then transferred to the acceptor end of tRNA(Glu). The protein is Glutamate--tRNA ligase 1 of Brucella melitensis biotype 1 (strain ATCC 23456 / CCUG 17765 / NCTC 10094 / 16M).